Here is a 293-residue protein sequence, read N- to C-terminus: Protease HtpX homolog (293 aa).

2 consecutive transmembrane segments (helical) span residues 4 to 24 (VILFLITNLAVMLVLSATLRI) and 40 to 60 (ALLMFSLVVGFTGSFISLLIS). Position 146 (His-146) interacts with Zn(2+). Glu-147 is an active-site residue. A Zn(2+)-binding site is contributed by His-150. The next 2 membrane-spanning stretches (helical) occupy residues 161–181 (LIQGVVNTFVVFLARVVGYFV) and 198–218 (VTVIVCEIVFGVLASIIVAWF). Glu-223 is a binding site for Zn(2+).

Belongs to the peptidase M48B family. Zn(2+) serves as cofactor.

The protein localises to the cell inner membrane. This is Protease HtpX homolog from Bordetella avium (strain 197N).